Reading from the N-terminus, the 341-residue chain is tRNA N6-adenosine threonylcarbamoyltransferase (341 aa).

2 residues coordinate Fe cation: His111 and His115. Substrate-binding positions include 134-138, Asp167, Gly180, and Asn276; that span reads LVSGG. Asp304 lines the Fe cation pocket.

The protein belongs to the KAE1 / TsaD family. Fe(2+) is required as a cofactor.

It localises to the cytoplasm. The enzyme catalyses L-threonylcarbamoyladenylate + adenosine(37) in tRNA = N(6)-L-threonylcarbamoyladenosine(37) in tRNA + AMP + H(+). Its function is as follows. Required for the formation of a threonylcarbamoyl group on adenosine at position 37 (t(6)A37) in tRNAs that read codons beginning with adenine. Is involved in the transfer of the threonylcarbamoyl moiety of threonylcarbamoyl-AMP (TC-AMP) to the N6 group of A37, together with TsaE and TsaB. TsaD likely plays a direct catalytic role in this reaction. This Pseudomonas syringae pv. tomato (strain ATCC BAA-871 / DC3000) protein is tRNA N6-adenosine threonylcarbamoyltransferase.